A 72-amino-acid polypeptide reads, in one-letter code: Translation initiation factor IF-1 (72 aa).

The S1-like domain maps to 1–72 (MAKEDSIEMQ…TKGRIVFRAR (72 aa)).

Belongs to the IF-1 family. As to quaternary structure, component of the 30S ribosomal translation pre-initiation complex which assembles on the 30S ribosome in the order IF-2 and IF-3, IF-1 and N-formylmethionyl-tRNA(fMet); mRNA recruitment can occur at any time during PIC assembly.

Its subcellular location is the cytoplasm. In terms of biological role, one of the essential components for the initiation of protein synthesis. Stabilizes the binding of IF-2 and IF-3 on the 30S subunit to which N-formylmethionyl-tRNA(fMet) subsequently binds. Helps modulate mRNA selection, yielding the 30S pre-initiation complex (PIC). Upon addition of the 50S ribosomal subunit IF-1, IF-2 and IF-3 are released leaving the mature 70S translation initiation complex. This Idiomarina loihiensis (strain ATCC BAA-735 / DSM 15497 / L2-TR) protein is Translation initiation factor IF-1.